Consider the following 106-residue polypeptide: uncharacterized protein (106 aa).

The N-terminal stretch at 1 to 31 (MKKKTKIILSLLAALIVILIVLPVLSPVVFT) is a signal peptide.

This is an uncharacterized protein from Bacillus subtilis (strain 168).